Reading from the N-terminus, the 94-residue chain is Exodeoxyribonuclease 7 small subunit (94 aa).

This sequence belongs to the XseB family. As to quaternary structure, heterooligomer composed of large and small subunits.

The protein localises to the cytoplasm. The enzyme catalyses Exonucleolytic cleavage in either 5'- to 3'- or 3'- to 5'-direction to yield nucleoside 5'-phosphates.. Its function is as follows. Bidirectionally degrades single-stranded DNA into large acid-insoluble oligonucleotides, which are then degraded further into small acid-soluble oligonucleotides. In Ralstonia nicotianae (strain ATCC BAA-1114 / GMI1000) (Ralstonia solanacearum), this protein is Exodeoxyribonuclease 7 small subunit.